Reading from the N-terminus, the 934-residue chain is Serine/threonine-protein kinase atg1 (934 aa).

The Protein kinase domain occupies 22–328; it reads YTRLDEIGRG…SDFFDCDTIT (307 aa). ATP contacts are provided by residues 28-36 and K51; that span reads IGRGSFATV. Residue D165 is the Proton acceptor of the active site. Disordered regions lie at residues 335–432, 462–481, 531–580, 684–703, 800–822, and 878–900; these read IADD…PRRP, RNTY…TKEE, RRPG…YGQS, TDPS…TDLT, RLPP…GSGA, and EEEE…RRDG. The segment covering 340–368 has biased composition (polar residues); the sequence is PSTSRRSSVAVNTSGSTSRPQSRTGSRTP. The span at 371–386 shows a compositional bias: basic and acidic residues; sequence MKREKDASYPGKKDDQ. Residues 538–550 are compositionally biased toward low complexity; the sequence is SSTATATSPLATT. Positions 561–577 are enriched in basic and acidic residues; it reads ARADSTHTRQGSYERRY.

This sequence belongs to the protein kinase superfamily. Ser/Thr protein kinase family. APG1/unc-51/ULK1 subfamily. Homodimer. Forms a ternary complex with ATG13 and ATG17.

The protein localises to the cytoplasm. The protein resides in the preautophagosomal structure membrane. It carries out the reaction L-seryl-[protein] + ATP = O-phospho-L-seryl-[protein] + ADP + H(+). The catalysed reaction is L-threonyl-[protein] + ATP = O-phospho-L-threonyl-[protein] + ADP + H(+). Its function is as follows. Serine/threonine protein kinase involved in the cytoplasm to vacuole transport (Cvt) and found to be essential in autophagy, where it is required for the formation of autophagosomes. Involved in the clearance of protein aggregates which cannot be efficiently cleared by the proteasome. Required for selective autophagic degradation of the nucleus (nucleophagy) as well as for mitophagy which contributes to regulate mitochondrial quantity and quality by eliminating the mitochondria to a basal level to fulfill cellular energy requirements and preventing excess ROS production. Also involved in endoplasmic reticulum-specific autophagic process, in selective removal of ER-associated degradation (ERAD) substrates. Plays a key role in ATG9 and ATG23 cycling through the pre-autophagosomal structure and is necessary to promote ATG18 binding to ATG9 through phosphorylation of ATG9. Catalyzes phosphorylation of ATG4, decreasing the interaction between ATG4 and ATG8 and impairing deconjugation of PE-conjugated forms of ATG8. Required for conidiation and development of aerial hyphae. The protein is Serine/threonine-protein kinase atg1 of Aspergillus oryzae (strain ATCC 42149 / RIB 40) (Yellow koji mold).